We begin with the raw amino-acid sequence, 48 residues long: M-oxotoxin-Ot1a (48 aa).

Expressed by the venom gland.

The protein resides in the secreted. The protein localises to the target cell membrane. Its function is as follows. Disrupts cell membranes, particularly those rich in phosphocholine, through formation of pores. Has antimicrobial activity against Gram-negative bacterium E.coli, Gram-positive bacteria B.subtilis and S.aureus, and hemolytic activity against sheep, pig and guinea pig erythrocytes. Has insecticidal activity against S.frugiperda ovarian cells by opening non-selective ion channels. Enhances the insecticidal activity of spider venom neurotoxic peptides. This Oxyopes takobius (Lynx spider) protein is M-oxotoxin-Ot1a.